The chain runs to 122 residues: U7 snRNA-associated Sm-like protein LSm10 (122 aa).

The Sm domain occupies 16 to 88 (SLIILLQGLQ…VRYVHIPDGV (73 aa)).

The protein belongs to the snRNP Sm proteins family. Component of the heptameric ring U7 snRNP complex, or U7 Sm protein core complex, at least composed of LSM10, LSM11, SNRPB, SNRPD3, SNRPE, SNRPF, SNRPG and U7 snRNA. Formation of the U7 snRNP is an ATP-dependent process mediated by a specialized SMN complex containing at least the Sm protein core complex and additionally, the U7-specific LSM10 and LSM11 proteins. Interacts with CLNS1A and SMN. In terms of processing, not methylated. Methylation is not necessary for interaction with SMN.

Its subcellular location is the nucleus. Its function is as follows. Appears to function in the U7 snRNP complex that is involved in histone 3'-end processing. Increases U7 snRNA levels but not histone 3'-end pre-mRNA processing activity, when overexpressed. Required for cell cycle progression from G1 to S phases. Binds specifically to U7 snRNA. Binds to the downstream cleavage product (DCP) of histone pre-mRNA. This chain is U7 snRNA-associated Sm-like protein LSm10 (Lsm10), found in Mus musculus (Mouse).